We begin with the raw amino-acid sequence, 205 residues long: Putative protein phosphatase inhibitor 2-like protein 1 (205 aa).

4 disordered regions span residues 1–44, 64–92, 107–148, and 171–205; these read MAAS…SKKS, GLMK…TETT, AEGL…TLHY, and VEEM…SRSS. 2 required for binding PPP1CC regions span residues 12–17 and 43–55; these read KGILKD and KSQK…ILAT. The segment covering 17–26 has biased composition (polar residues); that stretch reads DNTSTTSSMV. Basic and acidic residues predominate over residues 30–44; sequence EHPRGSVHEQLSKKS. A Phosphothreonine; by GSK3 modification is found at Thr-73. Composition is skewed to acidic residues over residues 80–91 and 121–130; these read GDDEDACSDTET and SSGEEDSDLS. A Phosphoserine; by CK2 modification is found at Ser-87. A compositionally biased stretch (basic and acidic residues) spans 131–144; the sequence is PEEREKKRQFEMRR. Residues 147–150 are required for binding PPP1CC catalytic center, displacing metal ions and inhibition of PPP1CC catalytic activity; that stretch reads HYNE. Over residues 182–205 the composition is skewed to polar residues; the sequence is SMNTEESNQGSTASDQQQNKSRSS.

It belongs to the protein phosphatase inhibitor 2 family.

Its function is as follows. Inhibitor of protein-phosphatase 1. The sequence is that of Putative protein phosphatase inhibitor 2-like protein 1 (PPP1R2P1) from Homo sapiens (Human).